The chain runs to 511 residues: DEP domain-containing protein 7 (511 aa).

The DEP domain occupies 46-136; the sequence is LQTQVEVKKR…SSCSLYRFTT (91 aa).

This sequence belongs to the DEPDC7 family.

The polypeptide is DEP domain-containing protein 7 (Depdc7) (Rattus norvegicus (Rat)).